Here is a 407-residue protein sequence, read N- to C-terminus: Putative metabolite transport protein HI_1104 (407 aa).

The Cytoplasmic segment spans residues 1 to 16 (MTNKVNSYGWKALIGS). Residues 17–37 (AVGYGMDGFDLLILGFMLSAI) form a helical membrane-spanning segment. Residues 38–48 (SADLNLTPAQG) are Periplasmic-facing. The chain crosses the membrane as a helical span at residues 49–69 (GSLVTWTLIGAVFGGILFGAL). The Cytoplasmic portion of the chain corresponds to 70 to 77 (SDKYGRVR). A helical transmembrane segment spans residues 78 to 98 (VLTWTILLFAVFTGLCAIAQG). At 99 to 107 (YWDLLIYRT) the chain is on the periplasmic side. A helical transmembrane segment spans residues 108–128 (IAGIGLGGEFGIGMALAAEAW). Residues 129 to 138 (PARHRAKAAS) are Cytoplasmic-facing. Residues 139–159 (YVALGWQVGVLGAALLTPLLL) form a helical membrane-spanning segment. Position 160 (proline 160) is a topological domain, periplasmic. Residues 161 to 181 (HIGWRGMFLVGIFPAFVAWFL) form a helical membrane-spanning segment. The Cytoplasmic segment spans residues 182 to 224 (RSHLHEPEIFTQKQTALSTQSSFTDKLRSFQLLIKDKATSKIS). The helical transmembrane segment at 225–245 (LGIVVLTSVQNFGYYGIMIWL) threads the bilayer. Residues 246-261 (PNFLSKQLGFSLTKSG) lie on the Periplasmic side of the membrane. Residues 262-282 (LWTAVTVCGMMAGIWIFGQLA) traverse the membrane as a helical segment. Topologically, residues 283 to 288 (DRIGRK) are cytoplasmic. A helical membrane pass occupies residues 289 to 309 (PSFLLFQLGAVISIVVYSQLT). At 310-312 (DPD) the chain is on the periplasmic side. A helical transmembrane segment spans residues 313–333 (IMLLAGAFLGMFVNGMLGGYG). Topologically, residues 334–357 (ALMAEAYPTEARATAQNVLFNIGR) are cytoplasmic. The next 2 helical transmembrane spans lie at 358-378 (AVGGFGPVVVGSVVLAYSFQT) and 379-399 (AIALLAIIYVIDMLATIFLIP). Residues 400-407 (ELKGKALD) are Cytoplasmic-facing.

This sequence belongs to the major facilitator superfamily. Aromatic acid:H(+) symporter (AAHS) (TC 2.A.1.15) family.

It is found in the cell inner membrane. The chain is Putative metabolite transport protein HI_1104 from Haemophilus influenzae (strain ATCC 51907 / DSM 11121 / KW20 / Rd).